Reading from the N-terminus, the 46-residue chain is Pape peptide (46 aa).

Positions 1 to 10 are enriched in low complexity; it reads KQLLKEALAP. The disordered stretch occupies residues 1-46; sequence KQLLKEALAPEPAPKPAPEPAPEPAPEPAPEAAPEPAAAAPEAAPE. Over residues 11–33 the composition is skewed to pro residues; it reads EPAPKPAPEPAPEPAPEPAPEAA. 4 PAPE repeats span residues 16–19, 20–23, 24–27, and 28–31; these read PAPE. Low complexity predominate over residues 34 to 46; sequence PEPAAAAPEAAPE.

In terms of tissue distribution, expressed by the venom gland.

It localises to the secreted. The chain is Pape peptide from Tityus stigmurus (Brazilian scorpion).